The primary structure comprises 1417 residues: DNA-directed RNA polymerase subunit beta' (1417 aa).

Zn(2+) is bound by residues C68, C70, C83, and C86. D458, D460, and D462 together coordinate Mg(2+). 4 residues coordinate Zn(2+): C811, C884, C891, and C894.

This sequence belongs to the RNA polymerase beta' chain family. As to quaternary structure, the RNAP catalytic core consists of 2 alpha, 1 beta, 1 beta' and 1 omega subunit. When a sigma factor is associated with the core the holoenzyme is formed, which can initiate transcription. Mg(2+) serves as cofactor. The cofactor is Zn(2+).

The catalysed reaction is RNA(n) + a ribonucleoside 5'-triphosphate = RNA(n+1) + diphosphate. In terms of biological role, DNA-dependent RNA polymerase catalyzes the transcription of DNA into RNA using the four ribonucleoside triphosphates as substrates. The polypeptide is DNA-directed RNA polymerase subunit beta' (Francisella tularensis subsp. novicida (strain U112)).